The sequence spans 105 residues: Thioredoxin (105 aa).

One can recognise a Thioredoxin domain in the interval 1–105 (ATMTLTDANF…LEAQLADVLQ (105 aa)). The cysteines at positions 29 and 32 are disulfide-linked.

Its function is as follows. Participates in various redox reactions through the reversible oxidation of its active center dithiol to a disulfide and catalyzes dithiol-disulfide exchange reactions. The polypeptide is Thioredoxin (trxA) (Alicyclobacillus acidocaldarius subsp. acidocaldarius (Bacillus acidocaldarius)).